The chain runs to 311 residues: Pyrimidine-specific ribonucleoside hydrolase RihA (311 aa).

H240 is a catalytic residue.

The protein belongs to the IUNH family. RihA subfamily.

Functionally, hydrolyzes cytidine or uridine to ribose and cytosine or uracil, respectively. This is Pyrimidine-specific ribonucleoside hydrolase RihA from Salmonella arizonae (strain ATCC BAA-731 / CDC346-86 / RSK2980).